The sequence spans 432 residues: Repulsive guidance molecule A (432 aa).

A signal peptide spans 1–29 (MGRGAGSTALGLFQILPVFLCIFPPVTSP). Residues 30 to 149 (CKILKCNSEF…NYTHCGLFGD (120 aa)) constitute a propeptide, removed in mature form. Residue Asn-96 is glycosylated (N-linked (GlcNAc...) asparagine). The segment at 99-122 (KDGPTSQPRLRTLPPGDSQERSDS) is disordered. 2 cysteine pairs are disulfide-bonded: Cys-126/Cys-207 and Cys-144/Cys-296. Asn-140 carries N-linked (GlcNAc...) asparagine glycosylation. The GPI-anchor amidated asparagine moiety is linked to residue Asn-404. A propeptide spans 405–432 (AAPSEHPWALPALWVALLSLSQCWLGLL) (removed in mature form).

It belongs to the repulsive guidance molecule (RGM) family. Autocatalytically cleaved at low pH; the two chains remain linked via two disulfide bonds.

It localises to the cell membrane. Functionally, acts as an axon-specific repulsive guidance molecule in the retinotectal system. Repulsive for a subset of axons of the temporal half of the retina. Provides thus positional information for the temporal axons invading the optic tectum in the stratum opticum. The polypeptide is Repulsive guidance molecule A (RGMA) (Gallus gallus (Chicken)).